Here is a 2322-residue protein sequence, read N- to C-terminus: Genome polyprotein (2322 aa).

Positions 29 to 182 (MEFTLYNGEK…NPADVLVFVP (154 aa)) constitute a Peptidase C28 domain. Residues cysteine 51, histidine 148, and aspartate 163 each act as for leader protease activity in the active site. 2 disordered regions span residues 199 to 219 (RLRGAGQSSPTTGSQNQSGNT) and 238 to 262 (QLGDNAISGGSNEGSTDTTSTHTNN). A lipid anchor (N-myristoyl glycine; by host) is attached at glycine 202. 2 stretches are compositionally biased toward polar residues: residues 204–219 (GQSSPTTGSQNQSGNT) and 238–251 (QLGDNAISGGSNEG). Low complexity predominate over residues 252–262 (STDTTSTHTNN). A Cell attachment site motif is present at residues 869–871 (RGD). In terms of domain architecture, SF3 helicase spans 1189 to 1353 (NVHIANLCKV…DGYKINNKLD (165 aa)). 1217-1224 (GKSGQGKS) contributes to the ATP binding site. An intramembrane segment occupies 1484–1504 (FEVVALCLTLLANIVIMLRQA). A disordered region spans residues 1512-1574 (DDPLDGDVTL…PRAEGPYAGP (63 aa)). Residues 1539-1553 (FRERSPTEQGTREDA) show a composition bias toward basic and acidic residues. Residues tyrosine 1571, tyrosine 1594, and tyrosine 1618 each carry the O-(5'-phospho-RNA)-tyrosine modification. Positions 1642 to 1838 (APPTDLQKMV…YCSCVSRSML (197 aa)) constitute a Peptidase C3 domain. Histidine 1685 serves as the catalytic For protease 3C activity; Proton donor/acceptor. Residues aspartate 1723 and cysteine 1802 each act as for protease 3C activity in the active site. The short motif at 1868 to 1876 (MRKTKLAPT) is the Nuclear localization signal element. Positions 2086-2204 (KNVWDVDYSA…ASDYDLDFEA (119 aa)) constitute a RdRp catalytic domain.

The protein belongs to the picornaviruses polyprotein family. Interacts with host ISG15. As to quaternary structure, interacts (via R-G-D motif) with host ITGAV/ITGB6. Interacts with host MAVS; this interaction inhibits binding of host TRAF3 to MAVS, thereby suppressing interferon-mediated responses. In terms of assembly, forms homooligomers. Homohexamer. Interacts with host VIM. Interacts with host BECN1. As to quaternary structure, interacts with host DCTN3. In terms of assembly, interacts with RNA-dependent RNA polymerase; this interaction allows 3B-1 to binds 2 polymerases and act as a primer. It also allows the recruitment of the RNA-dependent RNA polymerase to host membranes. Interacts with RNA-dependent RNA polymerase; this interaction allows 3B-2 to act as a primer. As to quaternary structure, interacts with RNA-dependent RNA polymerase; this interaction allows 3B-3 to act as a primer. In terms of assembly, interacts with 3B-1; this interaction allows 3B-1 to binds 2 polymerases and act as a primer. It also allows the recruitment of the RNA-dependent RNA polymerase to host membranes. Interacts with 3B-2; this interaction allows 3B-2 to act as a primer. Interacts with 3B-3; this interaction allows 3B-3 to act as a primer. Post-translationally, removes six residues from its own C-terminus, generating sLb(pro). Specific enzymatic cleavages in vivo by the viral proteases yield a variety of precursors and mature proteins. The polyprotein seems to be cotranslationally cleaved at the 2A/2B junction by a ribosomal skip from one codon to the next without formation of a peptide bond. This process would release the L-P1-2A peptide from the translational complex. In terms of processing, during virion maturation, immature virions are rendered infectious following cleavage of VP0 into VP4 and VP2. This maturation seems to be an autocatalytic event triggered by the presence of RNA in the capsid and is followed by a conformational change of the particle. Post-translationally, myristoylation is required during RNA encapsidation and formation of the mature virus particle. Uridylylated by the polymerase and covalently linked to the 5'-end of genomic RNA. These uridylylated forms act as a nucleotide-peptide primer for the polymerase.

The protein resides in the host nucleus. It is found in the host cytoplasm. The protein localises to the virion. It localises to the host endoplasmic reticulum membrane. Its subcellular location is the host cytoplasmic vesicle membrane. The catalysed reaction is Autocatalytically cleaves itself from the polyprotein of the foot-and-mouth disease virus by hydrolysis of a Lys-|-Gly bond, but then cleaves host cell initiation factor eIF-4G at bonds -Gly-|-Arg- and -Lys-|-Arg-.. It carries out the reaction a ribonucleoside 5'-triphosphate + H2O = a ribonucleoside 5'-diphosphate + phosphate + H(+). It catalyses the reaction RNA(n) + a ribonucleoside 5'-triphosphate = RNA(n+1) + diphosphate. The enzyme catalyses Selective cleavage of Gln-|-Gly bond in the poliovirus polyprotein. In other picornavirus reactions Glu may be substituted for Gln, and Ser or Thr for Gly.. Its function is as follows. Autocatalytically cleaves itself from the polyprotein at the L/VP0 junction. Also cleaves the host translation initiation factors EIF4G1 and EIF4G3, in order to shut off the capped cellular mRNA transcription. Plays a role in counteracting host innate antiviral response using diverse mechanisms. Possesses a deubiquitinase activity acting on both 'Lys-48' and 'Lys-63'-linked polyubiquitin chains. In turn, inhibits the ubiquitination and subsequent activation of key signaling molecules of type I IFN response such as host RIGI, TBK1, TRAF3 and TRAF6. Inhibits host NF-kappa-B activity by inducing a decrease in RELA mRNA levels. Cleaves a peptide bond in the C-terminus of host ISG15, resulting in the damaging of this modifier that can no longer be attached to target proteins. Also cleaves host G3BP1 and G3BP2 in order to inhibit cytoplasmic stress granules assembly. Lies on the inner surface of the capsid shell. After binding to the host receptor, the capsid undergoes conformational changes. Capsid protein VP4 is released, capsid protein VP1 N-terminus is externalized, and together, they shape a pore in the host membrane through which the viral genome is translocated into the host cell cytoplasm. After genome has been released, the channel shrinks. Functionally, forms an icosahedral capsid of pseudo T=3 symmetry with capsid proteins VP1 and VP3. The capsid is composed of 60 copies of each capsid protein organized in the form of twelve pentamers and encloses the viral positive strand RNA genome. Upon acidifcation in the endosome, dissociates into pentamers. In terms of biological role, forms an icosahedral capsid of pseudo T=3 symmetry with capsid proteins VP0 and VP3. The capsid is composed of 60 copies of each capsid protein organized in the form of twelve pentamers and encloses the viral positive strand RNA genome. Upon acidifcation in the endosome, dissociates into pentamers. Its function is as follows. Forms an icosahedral capsid of pseudo T=3 symmetry with capsid proteins VP2 and VP3. The capsid is composed of 60 copies of each capsid protein organized in the form of twelve pentamers and encloses the viral positive strand RNA genome. Mediates cell entry by attachment to an integrin receptor, usually host ITGAV/ITGB6. In addition, targets host MAVS to suppress type I IFN pathway. Upon acidifcation in the endosome, dissociates into pentamers. Mediates self-processing of the polyprotein by a translational effect termed 'ribosome skipping'. Mechanistically, 2A-mediated cleavage occurs between the C-terminal glycine and the proline of the downstream protein 2B. In the case of foot-and-mouth disease virus, the 2A oligopeptide is post-translationally 'trimmed' from the C-terminus of the upstream protein 1D by 3C proteinase. Functionally, plays an essential role in the virus replication cycle by acting as a viroporin. Creates a pore in the host endoplasmic reticulum and as a consequence releases Ca2+ in the cytoplasm of infected cell. In turn, high levels of cytoplasmic calcium may trigger membrane trafficking and transport of viral ER-associated proteins to viroplasms, sites of viral genome replication. In terms of biological role, associates with and induces structural rearrangements of intracellular membranes. Triggers host autophagy by interacting with host BECN1 and thereby promotes viral replication. Participates in viral replication and interacts with host DHX9. Displays RNA-binding, nucleotide binding and NTPase activities. May play a role in virion morphogenesis and viral RNA encapsidation by interacting with the capsid protein VP3. Its function is as follows. Plays important roles in virus replication, virulence and host range. Cooperates with host DDX56 to inhibit IRF3 nuclear translocation and subsequent type I interferon production. Covalently linked to the 5'-end of both the positive-strand and negative-strand genomic RNAs. Acts as a genome-linked replication primer. Functionally, cysteine protease that generates mature viral proteins from the precursor polyprotein. In addition to its proteolytic activity, binds to viral RNA and thus influences viral genome replication. RNA and substrate bind cooperatively to the protease. In terms of biological role, RNA-directed RNA polymerase 3D-POL replicates genomic and antigenomic RNA by recognizing replications specific signals. Covalently attaches UMP to a tyrosine of VPg, which is used to prime RNA synthesis. The positive stranded RNA genome is first replicated at virus induced membranous vesicles, creating a dsRNA genomic replication form. This dsRNA is then used as template to synthesize positive stranded RNA genomes. ss(+)RNA genomes are either translated, replicated or encapsidated. The chain is Genome polyprotein from Foot-and-mouth disease virus (isolate Swine/Taiwan/OTai/1997 serotype O) (FMDV).